The primary structure comprises 305 residues: Cbb3-type cytochrome c oxidase subunit CcoP2 (305 aa).

Helical transmembrane passes span 4–24 (FWSW…VWLL) and 57–77 (WWFM…VLYP). Cytochrome c domains are found at residues 130 to 209 (QALK…RSLS) and 219 to 300 (VDIE…YSLS). Residues cysteine 143, cysteine 146, histidine 147, methionine 186, cysteine 232, cysteine 235, histidine 236, and methionine 277 each coordinate heme c.

In terms of assembly, component of the cbb3-type cytochrome c oxidase at least composed of CcoN, CcoO, CcoQ and CcoP. Heme c is required as a cofactor.

Its subcellular location is the cell inner membrane. The protein operates within energy metabolism; oxidative phosphorylation. C-type cytochrome. Part of the cbb3-type cytochrome c oxidase complex. CcoP subunit is required for transferring electrons from donor cytochrome c via its heme groups to CcoO subunit. From there, electrons are shuttled to the catalytic binuclear center of CcoN subunit where oxygen reduction takes place. The complex also functions as a proton pump. The protein is Cbb3-type cytochrome c oxidase subunit CcoP2 of Stutzerimonas stutzeri (Pseudomonas stutzeri).